Reading from the N-terminus, the 105-residue chain is Large ribosomal subunit protein bL21 (105 aa).

The protein belongs to the bacterial ribosomal protein bL21 family. As to quaternary structure, part of the 50S ribosomal subunit. Contacts protein L20.

Its function is as follows. This protein binds to 23S rRNA in the presence of protein L20. This is Large ribosomal subunit protein bL21 from Rickettsia bellii (strain OSU 85-389).